The chain runs to 926 residues: Up-regulator of cell proliferation (926 aa).

At Ser3 the chain carries Phosphoserine. The VLIG-type G domain maps to Arg689–Arg924.

This sequence belongs to the TRAFAC class dynamin-like GTPase superfamily. Very large inducible GTPase (VLIG) family.

Its subcellular location is the cytoplasm. The protein resides in the nucleus. Its function is as follows. May be involved in cell cycle progression through the regulation of cyclin D1 expression. This Mus musculus (Mouse) protein is Up-regulator of cell proliferation (Urgcp).